A 256-amino-acid polypeptide reads, in one-letter code: Imidazole glycerol phosphate synthase subunit HisF (256 aa).

Active-site residues include Asp11 and Asp130.

This sequence belongs to the HisA/HisF family. As to quaternary structure, heterodimer of HisH and HisF.

It is found in the cytoplasm. The enzyme catalyses 5-[(5-phospho-1-deoxy-D-ribulos-1-ylimino)methylamino]-1-(5-phospho-beta-D-ribosyl)imidazole-4-carboxamide + L-glutamine = D-erythro-1-(imidazol-4-yl)glycerol 3-phosphate + 5-amino-1-(5-phospho-beta-D-ribosyl)imidazole-4-carboxamide + L-glutamate + H(+). The protein operates within amino-acid biosynthesis; L-histidine biosynthesis; L-histidine from 5-phospho-alpha-D-ribose 1-diphosphate: step 5/9. Its function is as follows. IGPS catalyzes the conversion of PRFAR and glutamine to IGP, AICAR and glutamate. The HisF subunit catalyzes the cyclization activity that produces IGP and AICAR from PRFAR using the ammonia provided by the HisH subunit. The protein is Imidazole glycerol phosphate synthase subunit HisF of Prochlorococcus marinus (strain MIT 9312).